The following is an 88-amino-acid chain: MKSVIAVLVLSLVLVNFTQAAKDDRWKACRMKCYTESKLCMNNDSKCFDSQSCNSCIQQVYSPCFNRCQEMLRRREAFKRMFAFDEEN.

Residues 1–20 (MKSVIAVLVLSLVLVNFTQA) form the signal peptide. Cystine bridges form between Cys-29-Cys-68, Cys-33-Cys-64, Cys-40-Cys-56, and Cys-47-Cys-53.

Is expressed in the ectodermal cells of gastrulae and planulae. Is also noticeable in the endoderm in late planulae. In the primary polyps, is expressed in both ectoderm (sensory neurons) and endoderm (ganglions). Is not expressed in nematocytes.

In terms of biological role, probable neuropeptide. This chain is Protein Aeq5-like1, found in Nematostella vectensis (Starlet sea anemone).